Here is an 840-residue protein sequence, read N- to C-terminus: Probable alpha-glucuronidase A (840 aa).

A signal peptide spans 1–19 (MWSGIPIFALLSSIGIAAA). Residues Asn-50, Asn-149, Asn-222, Asn-262, Asn-279, Asn-310, Asn-465, Asn-527, Asn-576, Asn-610, Asn-682, Asn-723, and Asn-732 are each glycosylated (N-linked (GlcNAc...) asparagine).

It belongs to the glycosyl hydrolase 67 family.

It localises to the secreted. The catalysed reaction is an alpha-D-glucuronoside + H2O = D-glucuronate + an alcohol. Functionally, alpha-glucuronidase involved in the hydrolysis of xylan, a major structural heterogeneous polysaccharide found in plant biomass representing the second most abundant polysaccharide in the biosphere, after cellulose. Releases 4-O-methylglucuronic acid from xylan. This Aspergillus fumigatus (strain ATCC MYA-4609 / CBS 101355 / FGSC A1100 / Af293) (Neosartorya fumigata) protein is Probable alpha-glucuronidase A (aguA).